The chain runs to 479 residues: Probable aspartic-type endopeptidase OPSB (479 aa).

Positions 1–19 are cleaved as a signal peptide; the sequence is MRGDSFIWSLTTAASLLYA. A Peptidase A1 domain is found at 58–393; sequence SGKTVSQDLD…DLDNNEISIA (336 aa). N-linked (GlcNAc...) asparagine glycosylation occurs at asparagine 68. Aspartate 76 is a catalytic residue. Asparagine 121 carries N-linked (GlcNAc...) asparagine glycosylation. Aspartate 275 is a catalytic residue. Asparagine 398 carries N-linked (GlcNAc...) asparagine glycosylation. The disordered stretch occupies residues 435 to 454; sequence LSGIETGVPGARPTSRGAAP. Residue glycine 451 is the site of GPI-anchor amidated glycine attachment. Positions 452 to 479 are cleaved as a propeptide — removed in mature form; that stretch reads AAPTMRPDVTFGVAAAGLAGAGILFAFM.

This sequence belongs to the peptidase A1 family.

It is found in the cell membrane. Probable GPI-anchored aspartic-type endopeptidase which contributes to virulence. This Arthroderma otae (strain ATCC MYA-4605 / CBS 113480) (Microsporum canis) protein is Probable aspartic-type endopeptidase OPSB (OPSB).